We begin with the raw amino-acid sequence, 51 residues long: MAHFKPLGKKLRLAKALKQNRSVPIWVIIKTNRRFRDHPKRRHWRRTKLKA.

It belongs to the eukaryotic ribosomal protein eL39 family.

The polypeptide is Large ribosomal subunit protein eL39 (Hyperthermus butylicus (strain DSM 5456 / JCM 9403 / PLM1-5)).